The primary structure comprises 471 residues: Glutamate--tRNA ligase (471 aa).

Positions 9–19 (PSPTGYLHVGG) match the 'HIGH' region motif. 4 residues coordinate Zn(2+): Cys98, Cys100, Cys125, and His127. The 'KMSKS' region motif lies at 237–241 (KLSKR). Lys240 is an ATP binding site.

The protein belongs to the class-I aminoacyl-tRNA synthetase family. Glutamate--tRNA ligase type 1 subfamily. As to quaternary structure, monomer. Requires Zn(2+) as cofactor.

The protein resides in the cytoplasm. It carries out the reaction tRNA(Glu) + L-glutamate + ATP = L-glutamyl-tRNA(Glu) + AMP + diphosphate. Its function is as follows. Catalyzes the attachment of glutamate to tRNA(Glu) in a two-step reaction: glutamate is first activated by ATP to form Glu-AMP and then transferred to the acceptor end of tRNA(Glu). This Citrobacter koseri (strain ATCC BAA-895 / CDC 4225-83 / SGSC4696) protein is Glutamate--tRNA ligase.